A 97-amino-acid chain; its full sequence is Conotoxin Cal6.1a (97 aa).

The signal sequence occupies residues 1–22 (MKLTTVLVVALLVLAACQFTVT). The interval 23–46 (DNSGDDPENPSLRSVGENQNPDST) is disordered. Positions 23–68 (DNSGDDPENPSLRSVGENQNPDSTKTITAWATRDMTNMRRGLNRPS) are excised as a propeptide. 3 disulfides stabilise this stretch: Cys71/Cys87, Cys78/Cys91, and Cys86/Cys96.

The protein belongs to the conotoxin O1 superfamily. Expressed by the venom duct.

Its subcellular location is the secreted. In terms of biological role, probable neurotoxin with unknown target. Possibly targets ion channels. This is Conotoxin Cal6.1a from Californiconus californicus (California cone).